The primary structure comprises 146 residues: UPF0178 protein BCG9842_B2187 (146 aa).

This sequence belongs to the UPF0178 family.

This chain is UPF0178 protein BCG9842_B2187, found in Bacillus cereus (strain G9842).